The following is a 361-amino-acid chain: MLLWLFQQLGEDIRAFNVFNYLTLRAVLAALTALTISFIVGPAVIRKLTALKIGQSVRSDGPQTHLVKAGTPTMGGALILVSVAVTTLLWADLSNDYVWLALMTLLGFGVIGWVDDWRKVVEKNSRGLASRWKYFWQSAIGLVVAVYLWQTASLPAHTELIIPFLKQATFGLSAAAFIALTYFVIVGASNAVNLTDGLDGLAILPTVMVASALAIFAYVAGNAVFSKYLGVPFVPGAGELAIFCAAMAGAGLAFLWFNAYPAEVFMGDVGALALGAALGVVAVVVRQEIILFIMCGVFVMETLSVMIQVASFKLTGKRVFRMAPIHHHYELKGWKENQVVVRFWIISMMLVLIGLSSLKLR.

10 consecutive transmembrane segments (helical) span residues 25–45, 73–93, 97–117, 134–154, 168–188, 200–220, 237–257, 264–284, 289–309, and 338–358; these read RAVL…PAVI, TMGG…WADL, YVWL…VDDW, YFWQ…TASL, ATFG…IVGA, GLAI…AYVA, AGEL…FLWF, VFMG…VAVV, IILF…MIQV, and QVVV…LSSL.

It belongs to the glycosyltransferase 4 family. MraY subfamily. Mg(2+) is required as a cofactor.

Its subcellular location is the cell inner membrane. It carries out the reaction UDP-N-acetyl-alpha-D-muramoyl-L-alanyl-gamma-D-glutamyl-meso-2,6-diaminopimeloyl-D-alanyl-D-alanine + di-trans,octa-cis-undecaprenyl phosphate = di-trans,octa-cis-undecaprenyl diphospho-N-acetyl-alpha-D-muramoyl-L-alanyl-D-glutamyl-meso-2,6-diaminopimeloyl-D-alanyl-D-alanine + UMP. The protein operates within cell wall biogenesis; peptidoglycan biosynthesis. In terms of biological role, catalyzes the initial step of the lipid cycle reactions in the biosynthesis of the cell wall peptidoglycan: transfers peptidoglycan precursor phospho-MurNAc-pentapeptide from UDP-MurNAc-pentapeptide onto the lipid carrier undecaprenyl phosphate, yielding undecaprenyl-pyrophosphoryl-MurNAc-pentapeptide, known as lipid I. The chain is Phospho-N-acetylmuramoyl-pentapeptide-transferase from Thiobacillus denitrificans (strain ATCC 25259 / T1).